A 146-amino-acid polypeptide reads, in one-letter code: MAEIVFQGASALALDAKGRLAVPARHRDVLGALAQGRLTLTKHPVGCLLVFPRPAWEGFRDKVAALPLRAEGWKRIFLGNAMDVEIDASSRVLVSPELRQAAGLVKDVMLLGMGSHFELWDVQRYQAHEAEVMQQGLPESLGDFSF.

SpoVT-AbrB domains lie at 9–55 (ASAL…PRPA) and 81–124 (AMDV…DVQR).

This sequence belongs to the MraZ family. Forms oligomers.

The protein localises to the cytoplasm. It is found in the nucleoid. The protein is Transcriptional regulator MraZ of Methylibium petroleiphilum (strain ATCC BAA-1232 / LMG 22953 / PM1).